Reading from the N-terminus, the 517-residue chain is Cytochrome P450 52A8 (517 aa).

Residue cysteine 464 coordinates heme.

Belongs to the cytochrome P450 family. Requires heme as cofactor.

In terms of biological role, together with an NADPH cytochrome P450 the enzyme system catalyzes the terminal hydroxylation as the first step in the assimilation of alkanes and fatty acids. Preferentially hydroxylates lauric acid. This Candida tropicalis (Yeast) protein is Cytochrome P450 52A8 (CYP52A8).